The sequence spans 568 residues: Urease subunit alpha (568 aa).

One can recognise a Urease domain in the interval Gly-132–Phe-568. The Ni(2+) site is built by His-137, His-139, and Lys-219. Lys-219 carries the post-translational modification N6-carboxylysine. Substrate is bound at residue His-221. Ni(2+) is bound by residues His-248 and His-274. His-322 functions as the Proton donor in the catalytic mechanism. Asp-362 is a Ni(2+) binding site.

The protein belongs to the metallo-dependent hydrolases superfamily. Urease alpha subunit family. Heterotrimer of UreA (gamma), UreB (beta) and UreC (alpha) subunits. Three heterotrimers associate to form the active enzyme. It depends on Ni cation as a cofactor. Carboxylation allows a single lysine to coordinate two nickel ions.

It is found in the cytoplasm. The catalysed reaction is urea + 2 H2O + H(+) = hydrogencarbonate + 2 NH4(+). The protein operates within nitrogen metabolism; urea degradation; CO(2) and NH(3) from urea (urease route): step 1/1. The sequence is that of Urease subunit alpha from Azobacteroides pseudotrichonymphae genomovar. CFP2.